The primary structure comprises 242 residues: N-glycosylase/DNA lyase (242 aa).

3 residues coordinate 8-oxoguanine: Gln-25, Ser-52, and Trp-63. The helix-hairpin-helix stretch occupies residues Lys-119 to Arg-183. The active-site Schiff-base intermediate with DNA is Lys-143. 2 residues coordinate 8-oxoguanine: Phe-147 and Pro-173. Asp-175 is a catalytic residue. The 8-oxoguanine site is built by Asp-209 and Trp-213.

Belongs to the archaeal N-glycosylase/DNA lyase (AGOG) family.

It catalyses the reaction 2'-deoxyribonucleotide-(2'-deoxyribose 5'-phosphate)-2'-deoxyribonucleotide-DNA = a 3'-end 2'-deoxyribonucleotide-(2,3-dehydro-2,3-deoxyribose 5'-phosphate)-DNA + a 5'-end 5'-phospho-2'-deoxyribonucleoside-DNA + H(+). DNA repair enzyme that is part of the base excision repair (BER) pathway; protects from oxidative damage by removing the major product of DNA oxidation, 8-oxoguanine (GO), from single- and double-stranded DNA substrates. This is N-glycosylase/DNA lyase from Methanopyrus kandleri (strain AV19 / DSM 6324 / JCM 9639 / NBRC 100938).